Reading from the N-terminus, the 346-residue chain is Ribonucleoside-diphosphate reductase subunit beta (346 aa).

Fe cation contacts are provided by E89, E120, and H123. Y129 is a catalytic residue. Fe cation contacts are provided by E193, E227, and H230.

This sequence belongs to the ribonucleoside diphosphate reductase small chain family. Tetramer of two alpha and two beta subunits. The cofactor is Fe cation.

The enzyme catalyses a 2'-deoxyribonucleoside 5'-diphosphate + [thioredoxin]-disulfide + H2O = a ribonucleoside 5'-diphosphate + [thioredoxin]-dithiol. In terms of biological role, provides the precursors necessary for DNA synthesis. Catalyzes the biosynthesis of deoxyribonucleotides from the corresponding ribonucleotides. This Chlamydia pneumoniae (Chlamydophila pneumoniae) protein is Ribonucleoside-diphosphate reductase subunit beta (nrdB).